The primary structure comprises 314 residues: Protein OPG185 (314 aa).

The N-terminal stretch at Met-1 to Ser-16 is a signal peptide. In terms of domain architecture, Ig-like V-type spans Thr-17–Glu-121. Residues Thr-17 to Glu-278 lie on the Virion surface side of the membrane. Cys-34 and Cys-103 are oxidised to a cystine. Asn-37, Asn-38, Asn-69, Asn-112, and Asn-161 each carry an N-linked (GlcNAc...) asparagine; by host glycan. Residues Asn-192–His-217 are disordered. The N-linked (GlcNAc...) asparagine; by host glycan is linked to Asn-253. Residues Ile-279–Asn-302 traverse the membrane as a helical segment. Over Lys-303–Val-314 the chain is Intravirion.

The protein belongs to the orthopoxvirus OPG185 family. In terms of assembly, heterodimerizes with OPG040. The heterodimer OPG185-OPG040 interacts with components of the entry fusion complex OPG143 and OPG094. Heterodimer with C3/VPC protein; disulfide-linked. Glycosylated; contains phosphate and sulfate-substituted glycans. O-glycosylation is required for hemagglutination and hemadsorption activities of infected cell membranes.

It localises to the virion membrane. The protein resides in the host membrane. Prevents cell to cell fusion by interacting with and directing the viral OPG040 protein on the host plasma membrane. The OPG185-OPG040 complex associates with components of the entry fusion complex (EFC) presumably to avoid superinfection and syncytium formation. Via its interaction with C3/VCP protein, protects the infected cell and probably also the extracellular enveloped virus from complement attack. This Bos taurus (Bovine) protein is Protein OPG185 (OPG185).